Consider the following 475-residue polypeptide: Beta-amyrin 28-monooxygenase (475 aa).

A helical transmembrane segment spans residues 2 to 22; it reads YLTILFLFVSSILLSLMFLLR. Position 422 (Cys-422) interacts with heme.

Belongs to the cytochrome P450 family. It depends on heme as a cofactor.

It localises to the membrane. The catalysed reaction is beta-amyrin + 3 reduced [NADPH--hemoprotein reductase] + 3 O2 = oleanolate + 3 oxidized [NADPH--hemoprotein reductase] + 4 H2O + 4 H(+). In terms of biological role, catalyzes the oxidation of the methyl group to a carboxyl group at the C-28 position of beta-amyrin to form oleanolate. The chain is Beta-amyrin 28-monooxygenase from Barbarea vulgaris (Yellow rocket).